The primary structure comprises 711 residues: Tyrosine-protein phosphatase 2 (711 aa).

The Rhodanese domain occupies 21-130 (TESVSWIIDL…FASSHPDAIV (110 aa)). 2 disordered regions span residues 275 to 306 (APQQ…SRVR) and 329 to 376 (IIPR…RANK). 2 stretches are compositionally biased toward polar residues: residues 290–306 (SYPS…SRVR) and 340–363 (NAQN…SNTR). Residues 433–698 (EMTRSLAFND…KFLYDVVDYL (266 aa)) enclose the Tyrosine-protein phosphatase domain. Cysteine 630 serves as the catalytic Phosphocysteine intermediate.

It belongs to the protein-tyrosine phosphatase family. Non-receptor class subfamily.

It is found in the cytoplasm. The catalysed reaction is O-phospho-L-tyrosyl-[protein] + H2O = L-tyrosyl-[protein] + phosphate. Functionally, plays a role in inhibiting the onset of mitosis. Dephosphorylates sty1/spc1 and wis1/spc2/sty2. The polypeptide is Tyrosine-protein phosphatase 2 (pyp2) (Schizosaccharomyces pombe (strain 972 / ATCC 24843) (Fission yeast)).